A 375-amino-acid polypeptide reads, in one-letter code: MAGELFIGLMSGTSLDGVDGVLADFADGRIAVRAYATAPFPAALRAELMALNTPGDNELHRAALAGNGLARLYAGVASQLLADSSTPASQVAALGAHGQTVRHRPTEFDGVGYTLQINNPSLLAELTGIDVVADFRSRDLAAGGQGAPLVPAFHRALFARAGQPVAVLNIGGISNLSLLPAADAPGEPAVLGFDCGPGNALMDHWSQLHTGQPFDRGGRWAASGQVLPGLLARLQADPYFAKAPPKSTGRDLFNPAWLSACLAPAIGAAPADVQATLTEFTASVCAADVLRYGSDSKLLIVCGGGALNDHLIERLRAHLPGVEVAASTAHGLPPLQVEAAAFAWLARSTLRREAGNLASVTGARGGRVLGAIYPA.

12–19 (GTSLDGVD) contacts ATP.

Belongs to the anhydro-N-acetylmuramic acid kinase family.

It carries out the reaction 1,6-anhydro-N-acetyl-beta-muramate + ATP + H2O = N-acetyl-D-muramate 6-phosphate + ADP + H(+). Its pathway is amino-sugar metabolism; 1,6-anhydro-N-acetylmuramate degradation. It participates in cell wall biogenesis; peptidoglycan recycling. Functionally, catalyzes the specific phosphorylation of 1,6-anhydro-N-acetylmuramic acid (anhMurNAc) with the simultaneous cleavage of the 1,6-anhydro ring, generating MurNAc-6-P. Is required for the utilization of anhMurNAc either imported from the medium or derived from its own cell wall murein, and thus plays a role in cell wall recycling. The polypeptide is Anhydro-N-acetylmuramic acid kinase (Variovorax paradoxus (strain S110)).